We begin with the raw amino-acid sequence, 198 residues long: Photosystem I assembly protein Ycf4 (198 aa).

Positions 1-20 are disordered; it reads MTASTTINKGDSPNGDSSAS. A run of 2 helical transmembrane segments spans residues 38–58 and 78–98; these read WASI…SSYL and LVMG…WLAI.

Belongs to the Ycf4 family.

It localises to the cellular thylakoid membrane. Its function is as follows. Seems to be required for the assembly of the photosystem I complex. This is Photosystem I assembly protein Ycf4 from Trichormus variabilis (strain ATCC 29413 / PCC 7937) (Anabaena variabilis).